We begin with the raw amino-acid sequence, 310 residues long: Olfactory receptor 10G2 (310 aa).

The Extracellular segment spans residues 1–29 (MGKTKNTSLDAVVTDFILLGLSHPPNLRS). N-linked (GlcNAc...) asparagine glycosylation occurs at asparagine 6. A helical transmembrane segment spans residues 30–50 (LLFLVFFIIYILTQLGNLLIL). Topologically, residues 51–58 (LTMWADPK) are cytoplasmic. Residues 59-80 (LCARPMYILLGVLSFLDMWLSS) form a helical membrane-spanning segment. Residues 81 to 104 (VTVPLLILDFTPSIKAIPFGGCVA) are Extracellular-facing. An intrachain disulfide couples cysteine 102 to cysteine 194. The chain crosses the membrane as a helical span at residues 105–125 (QLYFFHFLGSTQCFLYTLMAY). Residues 126–144 (DRYLAICQPLRYPVLMNGR) lie on the Cytoplasmic side of the membrane. The chain crosses the membrane as a helical span at residues 145–165 (LCTVLVAGAWVAGSMHGSIQA). The Extracellular segment spans residues 166–202 (TLTFRLPYCGPNQVDYFICDIPAVLRLACADTTVNEL). The helical transmembrane segment at 203-222 (VTFVDVGVVAASCFMLILLS) threads the bilayer. Residues 223 to 242 (YANIVNAILKIRTTDGRRRA) are Cytoplasmic-facing. The helical transmembrane segment at 243-263 (FSTCGSHLIVVTVYYVPCIFI) threads the bilayer. Residues 264 to 274 (YLRAGSKDPLD) are Extracellular-facing. Residues 275-295 (GAAAVFYTVVTPLLNPLIYTL) form a helical membrane-spanning segment. The Cytoplasmic segment spans residues 296 to 310 (RNQEVKSALKRITAG).

The protein belongs to the G-protein coupled receptor 1 family.

The protein localises to the cell membrane. Functionally, odorant receptor. The chain is Olfactory receptor 10G2 (OR10G2) from Homo sapiens (Human).